The sequence spans 318 residues: L-lactate dehydrogenase (318 aa).

Residues Val18, Asp39, Lys44, Tyr69, and 83-84 (GA) contribute to the NAD(+) site. 2 residues coordinate substrate: Gln86 and Arg92. NAD(+) is bound by residues Ser105, 122-124 (VSN), and Ser147. Residue 124-127 (NPVD) coordinates substrate. Substrate is bound at residue 152 to 155 (DTSR). His179 functions as the Proton acceptor in the catalytic mechanism. At Tyr225 the chain carries Phosphotyrosine. A substrate-binding site is contributed by Thr234.

Belongs to the LDH/MDH superfamily. LDH family. As to quaternary structure, homotetramer.

Its subcellular location is the cytoplasm. The enzyme catalyses (S)-lactate + NAD(+) = pyruvate + NADH + H(+). It functions in the pathway fermentation; pyruvate fermentation to lactate; (S)-lactate from pyruvate: step 1/1. Functionally, catalyzes the conversion of lactate to pyruvate. This chain is L-lactate dehydrogenase, found in Clostridium botulinum (strain ATCC 19397 / Type A).